The chain runs to 397 residues: Succinate--CoA ligase [ADP-forming] subunit beta (397 aa).

The ATP-grasp domain maps to 9 to 254 (KALLRSYGAP…ETEEDPKELA (246 aa)). Residues Lys46, 53 to 55 (GRG), Glu109, Ser112, and Glu117 each bind ATP. Mg(2+)-binding residues include Asn209 and Asp223. Substrate-binding positions include Asn274 and 331–333 (GIM).

This sequence belongs to the succinate/malate CoA ligase beta subunit family. In terms of assembly, heterotetramer of two alpha and two beta subunits. It depends on Mg(2+) as a cofactor.

The enzyme catalyses succinate + ATP + CoA = succinyl-CoA + ADP + phosphate. The catalysed reaction is GTP + succinate + CoA = succinyl-CoA + GDP + phosphate. Its pathway is carbohydrate metabolism; tricarboxylic acid cycle; succinate from succinyl-CoA (ligase route): step 1/1. In terms of biological role, succinyl-CoA synthetase functions in the citric acid cycle (TCA), coupling the hydrolysis of succinyl-CoA to the synthesis of either ATP or GTP and thus represents the only step of substrate-level phosphorylation in the TCA. The beta subunit provides nucleotide specificity of the enzyme and binds the substrate succinate, while the binding sites for coenzyme A and phosphate are found in the alpha subunit. The chain is Succinate--CoA ligase [ADP-forming] subunit beta from Cereibacter sphaeroides (strain ATCC 17029 / ATH 2.4.9) (Rhodobacter sphaeroides).